Consider the following 273-residue polypeptide: NADPH-dependent 7-cyano-7-deazaguanine reductase (273 aa).

81–83 (VES) is a binding site for substrate. Residue 83–84 (SK) coordinates NADPH. C179 functions as the Thioimide intermediate in the catalytic mechanism. The Proton donor role is filled by D186. 218-219 (AE) is a substrate binding site. NADPH is bound at residue 247 to 248 (RG).

It belongs to the GTP cyclohydrolase I family. QueF type 2 subfamily. Homodimer.

Its subcellular location is the cytoplasm. It catalyses the reaction 7-aminomethyl-7-carbaguanine + 2 NADP(+) = 7-cyano-7-deazaguanine + 2 NADPH + 3 H(+). It participates in tRNA modification; tRNA-queuosine biosynthesis. In terms of biological role, catalyzes the NADPH-dependent reduction of 7-cyano-7-deazaguanine (preQ0) to 7-aminomethyl-7-deazaguanine (preQ1). The protein is NADPH-dependent 7-cyano-7-deazaguanine reductase of Rickettsia canadensis (strain McKiel).